A 447-amino-acid chain; its full sequence is Signal recognition particle protein (447 aa).

Residues 108–115 (GLQGSGKT), 190–194 (DTAGR), and 248–251 (TKLD) contribute to the GTP site.

Belongs to the GTP-binding SRP family. SRP54 subfamily. In terms of assembly, part of the signal recognition particle protein translocation system, which is composed of SRP and FtsY. Interacts with RNA.

The protein localises to the cytoplasm. The enzyme catalyses GTP + H2O = GDP + phosphate + H(+). Functionally, involved in targeting and insertion of nascent membrane proteins into the cytoplasmic membrane. Binds to the hydrophobic signal sequence of the ribosome-nascent chain (RNC) as it emerges from the ribosomes. The SRP-RNC complex is then targeted to the cytoplasmic membrane where it interacts with the SRP receptor FtsY. This Mycoplasma mycoides protein is Signal recognition particle protein.